The primary structure comprises 450 residues: Bifunctional protein GlmU (450 aa).

The segment at 1-236 (MTAHKPFSAV…AWEVSGVNNR (236 aa)) is pyrophosphorylase. Residues 12 to 15 (LAAG), Lys26, Gln79, 84 to 85 (GT), 107 to 109 (YGD), Gly147, Glu162, Asn177, and Asn234 each bind UDP-N-acetyl-alpha-D-glucosamine. Asp109 is a binding site for Mg(2+). Position 234 (Asn234) interacts with Mg(2+). The linker stretch occupies residues 237–257 (AELASLESLWQNRKRQDVMKD). Residues 258–450 (GASLIAPETV…KKFRQRKKKK (193 aa)) form an N-acetyltransferase region. UDP-N-acetyl-alpha-D-glucosamine contacts are provided by Arg323 and Lys341. The active-site Proton acceptor is His353. Positions 356 and 367 each coordinate UDP-N-acetyl-alpha-D-glucosamine. Residues 376-377 (NY), Ser395, Ala413, and Arg430 each bind acetyl-CoA.

In the N-terminal section; belongs to the N-acetylglucosamine-1-phosphate uridyltransferase family. It in the C-terminal section; belongs to the transferase hexapeptide repeat family. As to quaternary structure, homotrimer. Mg(2+) serves as cofactor.

It is found in the cytoplasm. The catalysed reaction is alpha-D-glucosamine 1-phosphate + acetyl-CoA = N-acetyl-alpha-D-glucosamine 1-phosphate + CoA + H(+). It carries out the reaction N-acetyl-alpha-D-glucosamine 1-phosphate + UTP + H(+) = UDP-N-acetyl-alpha-D-glucosamine + diphosphate. Its pathway is nucleotide-sugar biosynthesis; UDP-N-acetyl-alpha-D-glucosamine biosynthesis; N-acetyl-alpha-D-glucosamine 1-phosphate from alpha-D-glucosamine 6-phosphate (route II): step 2/2. It participates in nucleotide-sugar biosynthesis; UDP-N-acetyl-alpha-D-glucosamine biosynthesis; UDP-N-acetyl-alpha-D-glucosamine from N-acetyl-alpha-D-glucosamine 1-phosphate: step 1/1. The protein operates within bacterial outer membrane biogenesis; LPS lipid A biosynthesis. Functionally, catalyzes the last two sequential reactions in the de novo biosynthetic pathway for UDP-N-acetylglucosamine (UDP-GlcNAc). The C-terminal domain catalyzes the transfer of acetyl group from acetyl coenzyme A to glucosamine-1-phosphate (GlcN-1-P) to produce N-acetylglucosamine-1-phosphate (GlcNAc-1-P), which is converted into UDP-GlcNAc by the transfer of uridine 5-monophosphate (from uridine 5-triphosphate), a reaction catalyzed by the N-terminal domain. The sequence is that of Bifunctional protein GlmU from Zymomonas mobilis subsp. mobilis (strain ATCC 31821 / ZM4 / CP4).